We begin with the raw amino-acid sequence, 632 residues long: Chaperone protein HtpG (632 aa).

The a; substrate-binding stretch occupies residues 1–339 (MTQQTMSFQA…SSDLPLNVSR (339 aa)). The segment at 340–559 (EILQESRDVK…DNDMSGYLQR (220 aa)) is b. Residues 560–632 (MLKAAGQNAP…TNALLLSRAA (73 aa)) form a c region.

It belongs to the heat shock protein 90 family. In terms of assembly, homodimer.

It localises to the cytoplasm. Molecular chaperone. Has ATPase activity. In Burkholderia thailandensis (strain ATCC 700388 / DSM 13276 / CCUG 48851 / CIP 106301 / E264), this protein is Chaperone protein HtpG.